Reading from the N-terminus, the 470-residue chain is Glycine--tRNA ligase (470 aa).

The substrate site is built by arginine 94 and glutamate 183. Residues 215 to 217 (RNE), 225 to 230 (FRMVEF), 298 to 299 (EI), and 342 to 345 (GCDR) contribute to the ATP site. 230–234 (FEQME) contributes to the substrate binding site. 338 to 342 (ETSSG) lines the substrate pocket.

Belongs to the class-II aminoacyl-tRNA synthetase family. In terms of assembly, homodimer.

The protein resides in the cytoplasm. The enzyme catalyses tRNA(Gly) + glycine + ATP = glycyl-tRNA(Gly) + AMP + diphosphate. In terms of biological role, catalyzes the attachment of glycine to tRNA(Gly). The protein is Glycine--tRNA ligase of Chlorobaculum tepidum (strain ATCC 49652 / DSM 12025 / NBRC 103806 / TLS) (Chlorobium tepidum).